We begin with the raw amino-acid sequence, 394 residues long: D-aspartate oxidase (394 aa).

Residues Ile-19, Ala-57, Ser-58, and Gly-62 each contribute to the FAD site. The chain crosses the membrane as a helical span at residues 190–210 (LIGHEPTAGVIVCVGLGALVL). Asn-214 carries an N-linked (GlcNAc...) asparagine glycan. FAD contacts are provided by Arg-342, Gly-373, and Gln-375.

The protein belongs to the DAMOX/DASOX family. The cofactor is FAD.

The protein resides in the membrane. It catalyses the reaction D-aspartate + O2 + H2O = oxaloacetate + H2O2 + NH4(+). In terms of biological role, selectively catalyzes the oxidative deamination of acidic amino acids. Protects the organism from the toxicity of D-amino acids. Enables the organism to utilize D-amino acids as a source of nutrients. Enables the organism to utilize D-aspartate and D-asparagine as a source of nitrogen. May play a role in its interaction with the host. This is D-aspartate oxidase from Cryptococcus neoformans var. grubii serotype A (strain H99 / ATCC 208821 / CBS 10515 / FGSC 9487) (Filobasidiella neoformans var. grubii).